The primary structure comprises 421 residues: NAD-specific glutamate dehydrogenase (421 aa).

Substrate-binding residues include Lys71 and Lys95. Residue Lys107 is the Proton donor of the active site. Thr191 and Asn222 together coordinate NAD(+). Ser355 contributes to the substrate binding site.

This sequence belongs to the Glu/Leu/Phe/Val dehydrogenases family. In terms of assembly, homohexamer.

It carries out the reaction L-glutamate + NAD(+) + H2O = 2-oxoglutarate + NH4(+) + NADH + H(+). The sequence is that of NAD-specific glutamate dehydrogenase (gluD) from Clostridioides difficile (Peptoclostridium difficile).